Reading from the N-terminus, the 368-residue chain is WD repeat-containing protein RUP2 (368 aa).

WD repeat units lie at residues 38-77, 97-138, 141-184, 192-232, 236-276, 279-318, and 330-368; these read SASD…RNNA, CTPA…PVFE, EHGG…EESV, ICRS…DPAL, GHTK…RTYE, VNNR…PVWV, and SDKR…KRKP.

As to quaternary structure, interacts with UVR8.

The protein resides in the nucleus. It is found in the cytoplasm. The protein localises to the cytosol. Functionally, functions in association with RUP1 as repressor of UV-B-induced photomorphogenesis mediated by UVR8 and HY5. Plays a crucial negative feedback regulatory role downstream of UVR8-COP1 to inhibit UVR8 function, balance UV-B-specific responses and ensure normal plant growth. Is involved in the regulation of photoperiodic flowering and vegetative development. May act as negative regulator of photoperiodic flowering by suppressing flowering through the action of CONSTANS (CO) and FLOWERING LOCUS T (FT). The protein is WD repeat-containing protein RUP2 (RUP2) of Arabidopsis thaliana (Mouse-ear cress).